Consider the following 364-residue polypeptide: Spermidine/putrescine import ATP-binding protein PotA (364 aa).

The 231-residue stretch at 6-236 (IEIRQIYKSY…PANLHVAMFI (231 aa)) folds into the ABC transporter domain. 38-45 (GPSGCGKT) contacts ATP.

This sequence belongs to the ABC transporter superfamily. Spermidine/putrescine importer (TC 3.A.1.11.1) family. In terms of assembly, the complex is composed of two ATP-binding proteins (PotA), two transmembrane proteins (PotB and PotC) and a solute-binding protein (PotD).

The protein localises to the cell inner membrane. The catalysed reaction is ATP + H2O + polyamine-[polyamine-binding protein]Side 1 = ADP + phosphate + polyamineSide 2 + [polyamine-binding protein]Side 1.. Functionally, part of the ABC transporter complex PotABCD involved in spermidine/putrescine import. Responsible for energy coupling to the transport system. This is Spermidine/putrescine import ATP-binding protein PotA from Legionella pneumophila (strain Paris).